A 281-amino-acid chain; its full sequence is Imidazole glycerol phosphate synthase subunit HisF (281 aa).

Catalysis depends on residues Asp-12 and Asp-131. The interval 256–281 (VRQAEPLPQPAREGLGDSARRAMSSG) is disordered.

This sequence belongs to the HisA/HisF family. As to quaternary structure, heterodimer of HisH and HisF.

Its subcellular location is the cytoplasm. It carries out the reaction 5-[(5-phospho-1-deoxy-D-ribulos-1-ylimino)methylamino]-1-(5-phospho-beta-D-ribosyl)imidazole-4-carboxamide + L-glutamine = D-erythro-1-(imidazol-4-yl)glycerol 3-phosphate + 5-amino-1-(5-phospho-beta-D-ribosyl)imidazole-4-carboxamide + L-glutamate + H(+). The protein operates within amino-acid biosynthesis; L-histidine biosynthesis; L-histidine from 5-phospho-alpha-D-ribose 1-diphosphate: step 5/9. Functionally, IGPS catalyzes the conversion of PRFAR and glutamine to IGP, AICAR and glutamate. The HisF subunit catalyzes the cyclization activity that produces IGP and AICAR from PRFAR using the ammonia provided by the HisH subunit. The sequence is that of Imidazole glycerol phosphate synthase subunit HisF from Thermosynechococcus vestitus (strain NIES-2133 / IAM M-273 / BP-1).